Here is a 159-residue protein sequence, read N- to C-terminus: Transmembrane protein 42 (159 aa).

4 consecutive transmembrane segments (helical) span residues 37–57 (FWGV…AASA), 59–79 (LAFG…VMAS), 100–120 (IASV…GYVL), and 124–144 (CQEV…TLIH).

The protein localises to the membrane. The chain is Transmembrane protein 42 (TMEM42) from Homo sapiens (Human).